The following is a 208-amino-acid chain: Uracil phosphoribosyltransferase (208 aa).

Residues Arg78, Arg103, and 130 to 138 (DPMLATGGS) contribute to the 5-phospho-alpha-D-ribose 1-diphosphate site. Uracil-binding positions include Ile193 and 198 to 200 (GDA). Residue Asp199 coordinates 5-phospho-alpha-D-ribose 1-diphosphate.

This sequence belongs to the UPRTase family. Mg(2+) is required as a cofactor.

The catalysed reaction is UMP + diphosphate = 5-phospho-alpha-D-ribose 1-diphosphate + uracil. Its pathway is pyrimidine metabolism; UMP biosynthesis via salvage pathway; UMP from uracil: step 1/1. Its activity is regulated as follows. Allosterically activated by GTP. Functionally, catalyzes the conversion of uracil and 5-phospho-alpha-D-ribose 1-diphosphate (PRPP) to UMP and diphosphate. The polypeptide is Uracil phosphoribosyltransferase (Escherichia coli O139:H28 (strain E24377A / ETEC)).